Consider the following 445-residue polypeptide: Ribosomal protein uS12 methylthiotransferase RimO (445 aa).

An MTTase N-terminal domain is found at 4-119 (IKVALVSLGC…LLESIKVFLK (116 aa)). [4Fe-4S] cluster-binding residues include Cys13, Cys48, Cys82, Cys156, Cys160, and Cys163. The Radical SAM core domain maps to 142 to 372 (TTPTYTAYVR…MILQQSISKD (231 aa)). One can recognise a TRAM domain in the interval 375–441 (KEKIGKTYEV…EYDLIGVVYN (67 aa)).

This sequence belongs to the methylthiotransferase family. RimO subfamily. Requires [4Fe-4S] cluster as cofactor.

It localises to the cytoplasm. It carries out the reaction L-aspartate(89)-[ribosomal protein uS12]-hydrogen + (sulfur carrier)-SH + AH2 + 2 S-adenosyl-L-methionine = 3-methylsulfanyl-L-aspartate(89)-[ribosomal protein uS12]-hydrogen + (sulfur carrier)-H + 5'-deoxyadenosine + L-methionine + A + S-adenosyl-L-homocysteine + 2 H(+). Catalyzes the methylthiolation of an aspartic acid residue of ribosomal protein uS12. This is Ribosomal protein uS12 methylthiotransferase RimO from Clostridium botulinum (strain ATCC 19397 / Type A).